Reading from the N-terminus, the 359-residue chain is Alanine racemase (359 aa).

Residue lysine 35 is the Proton acceptor; specific for D-alanine of the active site. The residue at position 35 (lysine 35) is an N6-(pyridoxal phosphate)lysine. Arginine 131 contributes to the substrate binding site. Tyrosine 253 acts as the Proton acceptor; specific for L-alanine in catalysis. Residue methionine 301 coordinates substrate.

Belongs to the alanine racemase family. Pyridoxal 5'-phosphate serves as cofactor.

The enzyme catalyses L-alanine = D-alanine. The protein operates within amino-acid biosynthesis; D-alanine biosynthesis; D-alanine from L-alanine: step 1/1. Catalyzes the interconversion of L-alanine and D-alanine. May also act on other amino acids. In Laribacter hongkongensis (strain HLHK9), this protein is Alanine racemase (alr).